The chain runs to 602 residues: Glycoprotein G (602 aa).

Over 1-49 (MPAENKKVRFENTTSDKGKIPSKVIKSYYGTMDIKKINEGLLDSKILSA) the chain is Intravirion. A helical membrane pass occupies residues 50 to 70 (FNTVIALLGSIVIIVMNIMII). Topologically, residues 71-602 (QNYTRSTDNQ…FAVKIPEQCT (532 aa)) are virion surface. Residues asparagine 72 and asparagine 159 are each glycosylated (N-linked (GlcNAc...) asparagine; by host). The segment at 96–163 (GLADKIGTEI…KIHECNISCP (68 aa)) is stalk. The segment at 177 to 602 (GVSNLVGLPN…FAVKIPEQCT (426 aa)) is head. 7 disulfide bridges follow: cysteine 189-cysteine 601, cysteine 216-cysteine 240, cysteine 282-cysteine 295, cysteine 382-cysteine 395, cysteine 387-cysteine 499, cysteine 493-cysteine 503, and cysteine 565-cysteine 574. N-linked (GlcNAc...) asparagine; by host glycosylation is found at asparagine 306 and asparagine 378. N-linked (GlcNAc...) asparagine; by host glycosylation is found at asparagine 417 and asparagine 481. A glycan (N-linked (GlcNAc...) asparagine; by host) is linked at asparagine 529.

Belongs to the paramyxoviruses hemagglutinin-neuraminidase family. In terms of assembly, homotetramer; disulfide-linked. Interacts with host EFNB2; this interaction allows the virus entry into the host cell. Interacts with host EFNB3; this interaction allows the virus entry into the host cell. Interacts with the fusion glycoprotein; this interaction involves both head and stalk regions of glygoprotein G. Post-translationally, N-glycosylated.

Its subcellular location is the virion membrane. The protein resides in the host cell membrane. In terms of biological role, interacts with host ephrinB2/EFNB2 or ephrin B3/EFNB3 to provide virion attachment to target cell. This attachment induces virion internalization predominantly through clathrin-mediated endocytosis. This Cynopterus brachyotis (Lesser short-nosed fruit bat) protein is Glycoprotein G (G).